The primary structure comprises 255 residues: Reaction center protein L chain (255 aa).

Helical transmembrane passes span 12–35, 64–92, and 95–120; these read GFFG…GTAL, GLWQ…RKLG, and LHIP…LLLG. His133 and His153 together coordinate (7R,8Z)-bacteriochlorophyll b. The helical transmembrane segment at 150 to 179 threads the bilayer; it reads NPAHMIGITFFFTNCMAFGMHGSIILSVLN. A Fe cation-binding site is contributed by His170. Phe196 provides a ligand contact to a ubiquinone. A helical membrane pass occupies residues 205 to 231; it reads GTLGIHRLGVFLAISAAFWSAVCIILS. Position 210 (His210) interacts with Fe cation.

This sequence belongs to the reaction center PufL/M/PsbA/D family. In terms of assembly, reaction center is composed of four bacteriochlorophylls, two bacteriopheophytins, two ubiquinones, one iron, and three highly hydrophobic polypeptide chains (designated L, M, and H).

It localises to the cellular chromatophore membrane. Its function is as follows. The reaction center is a membrane-bound complex that mediates the initial photochemical event in the electron transfer process of photosynthesis. The polypeptide is Reaction center protein L chain (pufL) (Pararhodospirillum photometricum (Rhodospirillum photometricum)).